Consider the following 312-residue polypeptide: MENYNQTSTDFILLGLFPPSRIDLFFFILIVFIFLMALIGNLSMILLIFLDTHLHTPMYFLLSQLSLIDLNYISTIVPKMASDFLHGNKSISFTGCGIQSFFFLALGGAEALLLASMAYDRYIAICFPLHYLIRMSKRVCVLMITGSWIIGSINACAHTVYVLHIPYCRSRAINHFFCDVPAMVTLACMDTWVYEGTVFLSATIFLVFPFIGISCSYGQVLFAVYHMKSAEGRKKAYLTCSTHLTVVTFYYAPFVYTYLRPRSLRSPTEDKVLAVFYTILTPMLNPIIYSLRNKEVMGALTRVSQRICSVKM.

Topologically, residues 1–24 (MENYNQTSTDFILLGLFPPSRIDL) are extracellular. The N-linked (GlcNAc...) asparagine glycan is linked to asparagine 5. The chain crosses the membrane as a helical span at residues 25–48 (FFFILIVFIFLMALIGNLSMILLI). At 49–56 (FLDTHLHT) the chain is on the cytoplasmic side. A helical membrane pass occupies residues 57–78 (PMYFLLSQLSLIDLNYISTIVP). Residues 79–99 (KMASDFLHGNKSISFTGCGIQ) lie on the Extracellular side of the membrane. Asparagine 88 carries N-linked (GlcNAc...) asparagine glycosylation. Cysteine 96 and cysteine 188 are joined by a disulfide. The helical transmembrane segment at 100–119 (SFFFLALGGAEALLLASMAY) threads the bilayer. At 120–138 (DRYIAICFPLHYLIRMSKR) the chain is on the cytoplasmic side. Residues 139–157 (VCVLMITGSWIIGSINACA) form a helical membrane-spanning segment. Topologically, residues 158 to 194 (HTVYVLHIPYCRSRAINHFFCDVPAMVTLACMDTWVY) are extracellular. The chain crosses the membrane as a helical span at residues 195 to 218 (EGTVFLSATIFLVFPFIGISCSYG). Over 219–235 (QVLFAVYHMKSAEGRKK) the chain is Cytoplasmic. Residues 236-258 (AYLTCSTHLTVVTFYYAPFVYTY) form a helical membrane-spanning segment. Residues 259-271 (LRPRSLRSPTEDK) lie on the Extracellular side of the membrane. A helical membrane pass occupies residues 272–291 (VLAVFYTILTPMLNPIIYSL). Residues 292–312 (RNKEVMGALTRVSQRICSVKM) lie on the Cytoplasmic side of the membrane.

Belongs to the G-protein coupled receptor 1 family.

Its subcellular location is the cell membrane. Its function is as follows. Odorant receptor. The protein is Olfactory receptor 2L8 (OR2L8) of Homo sapiens (Human).